A 290-amino-acid chain; its full sequence is Protease HtpX (290 aa).

A run of 2 helical transmembrane segments spans residues 6 to 26 (LFLV…NILF) and 36 to 56 (ISGL…ISLL). H143 contributes to the Zn(2+) binding site. Residue E144 is part of the active site. Residue H147 coordinates Zn(2+). A run of 2 helical transmembrane segments spans residues 158–178 (LIQG…AGVI) and 200–220 (ITVF…VMWF). Zn(2+) is bound at residue E225.

This sequence belongs to the peptidase M48B family. Requires Zn(2+) as cofactor.

It localises to the cell inner membrane. In Aeromonas salmonicida (strain A449), this protein is Protease HtpX.